The primary structure comprises 744 residues: NAD(P)H-quinone oxidoreductase subunit 5, chloroplastic (744 aa).

Helical transmembrane passes span 9–29 (WIIP…LLFF), 40–60 (WVFP…DLSI), 89–109 (IDSL…LVLI), 125–145 (FTYL…SNLI), 147–167 (VYIF…FWFT), 185–205 (GDFG…SLEF), 219–239 (NEVN…GSVA), 258–278 (TPIS…FLVA), 280–300 (LLPL…IGII), 327–347 (LGYM…FHLI), 354–374 (ALLF…VGYS), 396–416 (NAFL…CFWS), 425–445 (WLYS…TAFY), 552–572 (LFSM…GISF), 612–632 (FSVS…KPVF), and 724–744 (ISSY…SIFI).

It belongs to the complex I subunit 5 family. As to quaternary structure, NDH is composed of at least 16 different subunits, 5 of which are encoded in the nucleus.

The protein localises to the plastid. It localises to the chloroplast thylakoid membrane. The catalysed reaction is a plastoquinone + NADH + (n+1) H(+)(in) = a plastoquinol + NAD(+) + n H(+)(out). The enzyme catalyses a plastoquinone + NADPH + (n+1) H(+)(in) = a plastoquinol + NADP(+) + n H(+)(out). Its function is as follows. NDH shuttles electrons from NAD(P)H:plastoquinone, via FMN and iron-sulfur (Fe-S) centers, to quinones in the photosynthetic chain and possibly in a chloroplast respiratory chain. The immediate electron acceptor for the enzyme in this species is believed to be plastoquinone. Couples the redox reaction to proton translocation, and thus conserves the redox energy in a proton gradient. The chain is NAD(P)H-quinone oxidoreductase subunit 5, chloroplastic (ndhF) from Cicer arietinum (Chickpea).